The chain runs to 425 residues: Putative integrase/recombinase y4rF (425 aa).

In terms of domain architecture, Core-binding (CB) spans 123–210 (DPDALLLASF…HIRTFLRFLC (88 aa)). Residues 233-418 (HLPPRLAWGD…AASQLAEVAL (186 aa)) form the Tyr recombinase domain. Active-site residues include Arg273, Lys298, His370, Arg373, and His396. Tyr405 serves as the catalytic O-(3'-phospho-DNA)-tyrosine intermediate.

This sequence belongs to the 'phage' integrase family.

This chain is Putative integrase/recombinase y4rF, found in Sinorhizobium fredii (strain NBRC 101917 / NGR234).